We begin with the raw amino-acid sequence, 481 residues long: Betaine aldehyde dehydrogenase 2 (481 aa).

Residues serine 29 and aspartate 96 each coordinate K(+). 152–154 serves as a coordination point for NAD(+); the sequence is GAW. The active-site Charge relay system is lysine 164. Residue 178 to 181 participates in NAD(+) binding; the sequence is KPSE. K(+) is bound at residue valine 182. 231–234 lines the NAD(+) pocket; that stretch reads SVKT. Isoleucine 246 lines the K(+) pocket. Residue glutamate 252 is the Proton acceptor of the active site. Glycine 254, cysteine 286, and glutamate 383 together coordinate NAD(+). Cysteine 286 serves as the catalytic Nucleophile. Cysteine 286 is modified (cysteine sulfenic acid (-SOH)). Residues lysine 453 and glycine 456 each contribute to the K(+) site. Glutamate 460 serves as the catalytic Charge relay system.

It belongs to the aldehyde dehydrogenase family. In terms of assembly, dimer of dimers. K(+) serves as cofactor.

It catalyses the reaction betaine aldehyde + NAD(+) + H2O = glycine betaine + NADH + 2 H(+). Its pathway is amine and polyamine biosynthesis; betaine biosynthesis via choline pathway; betaine from betaine aldehyde: step 1/1. In terms of biological role, involved in the biosynthesis of the osmoprotectant glycine betaine. Catalyzes the irreversible oxidation of betaine aldehyde to the corresponding acid. The sequence is that of Betaine aldehyde dehydrogenase 2 from Rhizobium meliloti (strain 1021) (Ensifer meliloti).